The primary structure comprises 68 residues: Purkinje cell protein 4-like protein 1 (68 aa).

Residues 1–16 (MSELNTKTPPAANQAS) show a composition bias toward polar residues. Residues 1–42 (MSELNTKTPPAANQASDPEEKGKPGSIKKAEEEEEIDIDLTA) form a disordered region. T8 carries the post-translational modification Phosphothreonine. The segment covering 18–31 (PEEKGKPGSIKKAE) has biased composition (basic and acidic residues). An IQ domain is found at 45–68 (TEKAALAIQGKFRRFQKRKKDSSS).

It belongs to the PCP4 family. As to expression, expressed in laminar and nuclear structures of the CNS.

This Mus musculus (Mouse) protein is Purkinje cell protein 4-like protein 1 (Pcp4l1).